Consider the following 204-residue polypeptide: Cardiotrophin-2 (204 aa).

A signal peptide spans 1 to 22 (MYCLLATPLCLLSLLLPPLSPA). N44 carries N-linked (GlcNAc...) asparagine glycosylation.

Belongs to the IL-6 superfamily. Binds to tripartite CNTF receptor complex consisting of CNTF alpha chain, LIFR and IL6ST (in vitro). As to expression, not detected in adult tissues.

It localises to the secreted. In terms of biological role, increases the platelet count associated with splenomegaly. May have an important role in neuronal precursor development and maturation. The protein is Cardiotrophin-2 (Ctf2) of Mus musculus (Mouse).